The sequence spans 241 residues: Uridylate kinase (241 aa).

15 to 18 (KLSG) contributes to the ATP binding site. The tract at residues 23–28 (GTEGFG) is involved in allosteric activation by GTP. Gly57 contributes to the UMP binding site. Residues Gly58 and Arg62 each contribute to the ATP site. UMP contacts are provided by residues Asp77 and 138–145 (TGNPFFTT). 3 residues coordinate ATP: Thr165, Phe171, and Asp174.

The protein belongs to the UMP kinase family. In terms of assembly, homohexamer.

Its subcellular location is the cytoplasm. It carries out the reaction UMP + ATP = UDP + ADP. It participates in pyrimidine metabolism; CTP biosynthesis via de novo pathway; UDP from UMP (UMPK route): step 1/1. Allosterically activated by GTP. Inhibited by UTP. Its function is as follows. Catalyzes the reversible phosphorylation of UMP to UDP. The polypeptide is Uridylate kinase (Shigella dysenteriae serotype 1 (strain Sd197)).